Here is a 318-residue protein sequence, read N- to C-terminus: NADH-ubiquinone oxidoreductase chain 1 (318 aa).

Transmembrane regions (helical) follow at residues 2–22 (FMIN…FLTL), 70–90 (MFII…SPLP), 100–120 (LGVL…LWSG), 136–156 (VAQT…VLLM), 172–192 (LWLL…TLAE), 222–242 (LFFL…AILF), 253–273 (ELYT…FLWI), and 294–314 (LPLT…TASI).

The protein belongs to the complex I subunit 1 family. In terms of assembly, core subunit of respiratory chain NADH dehydrogenase (Complex I) which is composed of 45 different subunits.

Its subcellular location is the mitochondrion inner membrane. The enzyme catalyses a ubiquinone + NADH + 5 H(+)(in) = a ubiquinol + NAD(+) + 4 H(+)(out). Core subunit of the mitochondrial membrane respiratory chain NADH dehydrogenase (Complex I) which catalyzes electron transfer from NADH through the respiratory chain, using ubiquinone as an electron acceptor. Essential for the catalytic activity and assembly of complex I. This Balaenoptera musculus (Blue whale) protein is NADH-ubiquinone oxidoreductase chain 1 (MT-ND1).